Here is a 433-residue protein sequence, read N- to C-terminus: FAD-dependent monooxygenase notI (433 aa).

FAD is bound by residues E45 and R117. Residue R195 is part of the active site. FAD is bound by residues D314 and A327.

Belongs to the paxM FAD-dependent monooxygenase family. It depends on FAD as a cofactor.

It participates in alkaloid biosynthesis. FAD-dependent monooxygenase; part of the gene cluster that mediates the biosynthesis of notoamide, a fungal indole alkaloid that belongs to a family of natural products containing a characteristic bicyclo[2.2.2]diazaoctane core. The first step of notoamide biosynthesis involves coupling of L-proline and L-tryptophan by the bimodular NRPS notE, to produce cyclo-L-tryptophan-L-proline called brevianamide F. The reverse prenyltransferase notF then acts as a deoxybrevianamide E synthase and converts brevianamide F to deoxybrevianamide E via reverse prenylation at C-2 of the indole ring leading to the bicyclo[2.2.2]diazaoctane core. Deoxybrevianamide E is further hydroxylated at C-6 of the indole ring, likely catalyzed by the cytochrome P450 monooxygenase notG, to yield 6-hydroxy-deoxybrevianamide E. 6-hydroxy-deoxybrevianamide E is a specific substrate of the prenyltransferase notC for normal prenylation at C-7 to produce 6-hydroxy-7-prenyl-deoxybrevianamide, also called notoamide S. As the proposed pivotal branching point in notoamide biosynthesis, notoamide S can be diverted to notoamide E through an oxidative pyran ring closure putatively catalyzed by either notH cytochrome P450 monooxygenase or the notD FAD-linked oxidoreductase. This step would be followed by an indole 2,3-epoxidation-initiated pinacol-like rearrangement catalyzed by the notB FAD-dependent monooxygenase leading to the formation of notoamide C and notoamide D. On the other hand notoamide S is converted to notoamide T by notH (or notD), a bifunctional oxidase that also functions as the intramolecular Diels-Alderase responsible for generation of (+)-notoamide T. To generate antipodal (-)-notoaminide T, notH' (or notD') in Aspergillus versicolor is expected to catalyze a Diels-Alder reaction leading to the opposite stereochemistry. The remaining oxidoreductase notD (or notH) likely catalyzes the oxidative pyran ring formation to yield (+)-stephacidin A. The FAD-dependent monooxygenase notI is highly similar to notB and is predicted to catalyze a similar conversion from (+)-stephacidin A to (-)-notoamide B via the 2,3-epoxidation of (+)-stephacidin A followed by a pinacol-type rearrangement. Finally, it remains unclear which enzyme could be responsible for the final hydroxylation steps leading to notoamide A and sclerotiamide. This is FAD-dependent monooxygenase notI from Aspergillus sp. (strain MF297-2).